The following is a 252-amino-acid chain: SPbeta prophage-derived uncharacterized protein YomH (252 aa).

The sequence is that of SPbeta prophage-derived uncharacterized protein YomH (yomH) from Bacillus subtilis (strain 168).